Reading from the N-terminus, the 280-residue chain is Probable ketoamine kinase lp_1983 (280 aa).

Residue Asp-87–Leu-89 participates in ATP binding. Asp-189 functions as the Proton acceptor in the catalytic mechanism.

Belongs to the fructosamine kinase family.

It carries out the reaction N(6)-(D-ribulosyl)-L-lysine + ATP = N(6)-(3-O-phospho-D-ribulosyl)-L-lysine + ADP + H(+). The enzyme catalyses N-(D-ribulosyl)-cadaverine + ATP = N-(3-O-phospho-D-ribulosyl)-cadaverine + ADP + H(+). It catalyses the reaction N(6)-(D-erythrulosyl)-L-lysine + ATP = N(6)-(3-O-phospho-D-erythrulosyl)-L-lysine + ADP + H(+). The catalysed reaction is N-(D-erythrulosyl)-cadaverine + ATP = N-(3-O-phospho-D-erythrulosyl)-cadaverine + ADP + H(+). It carries out the reaction N(6)-D-ribulosyl-L-lysyl-[protein] + ATP = N(6)-(3-O-phospho-D-ribulosyl)-L-lysyl-[protein] + ADP + H(+). The enzyme catalyses N(6)-(D-erythrulosyl)-L-lysyl-[protein] + ATP = N(6)-(3-O-phospho-D-erythrulosyl)-L-lysyl-[protein] + ADP + H(+). Its function is as follows. Ketoamine kinase that phosphorylates ketoamines, such as erythruloselysine, erythrulosecadaverine, ribuloselysine and ribulosecadaverine, on the third carbon of the sugar moiety to generate ketoamine 3-phosphate. Has higher activity on free lysine (erythruloselysine and ribuloselysine), than on ribuloselysine and erythruloselysine residues on glycated proteins. The protein is Probable ketoamine kinase lp_1983 of Lactiplantibacillus plantarum (strain ATCC BAA-793 / NCIMB 8826 / WCFS1) (Lactobacillus plantarum).